The following is a 463-amino-acid chain: Lipase 6 (463 aa).

The first 16 residues, 1–16, serve as a signal peptide directing secretion; the sequence is MRDLILFLSLLHTIFA. Residues C112 and C285 are joined by a disulfide bond. Residue S196 is the Charge relay system of the active site. N-linked (GlcNAc...) asparagine glycosylation is present at N231. Active-site charge relay system residues include D348 and H381. C364 and C409 are joined by a disulfide. Residue N422 is glycosylated (N-linked (GlcNAc...) asparagine).

The protein belongs to the AB hydrolase superfamily. Lipase family. Class Lip subfamily.

It localises to the secreted. The catalysed reaction is a triacylglycerol + H2O = a diacylglycerol + a fatty acid + H(+). Functionally, secreted lipase that is able to hydrolyze both the neutral triacylglycerols and the monopalmitate ester Tween 40, allowing the use of hydrolyzed products as carbon sources. Has broad lipolytic activity, which may be important for colonization and subsequent infection, therefore contributing to the persistence and virulence in human tissue. The protein is Lipase 6 of Candida albicans (strain SC5314 / ATCC MYA-2876) (Yeast).